Here is a 236-residue protein sequence, read N- to C-terminus: Protein-L-isoaspartate O-methyltransferase 1 (236 aa).

Residue serine 85 is part of the active site.

This sequence belongs to the methyltransferase superfamily. L-isoaspartyl/D-aspartyl protein methyltransferase family.

It localises to the cytoplasm. The catalysed reaction is [protein]-L-isoaspartate + S-adenosyl-L-methionine = [protein]-L-isoaspartate alpha-methyl ester + S-adenosyl-L-homocysteine. In terms of biological role, catalyzes the methyl esterification of L-isoaspartyl residues in peptides and proteins that result from spontaneous decomposition of normal L-aspartyl and L-asparaginyl residues. It plays a role in the repair and/or degradation of damaged proteins. This Polaromonas sp. (strain JS666 / ATCC BAA-500) protein is Protein-L-isoaspartate O-methyltransferase 1.